The following is a 149-amino-acid chain: Transcriptional repressor NrdR (149 aa).

Residues 3–34 fold into a zinc finger; the sequence is CPFCFAVDTKVIDSRLVGEGSSVRRRRQCLVC. In terms of domain architecture, ATP-cone spans 49 to 139; the sequence is PRVVKSNDVR…VYRSFEDIKE (91 aa).

Belongs to the NrdR family. The cofactor is Zn(2+).

Functionally, negatively regulates transcription of bacterial ribonucleotide reductase nrd genes and operons by binding to NrdR-boxes. In Shigella flexneri, this protein is Transcriptional repressor NrdR.